The following is a 122-amino-acid chain: Small ribosomal subunit protein uS13 (122 aa).

Residues 99–122 are disordered; that stretch reads RGQRTHTNARTRKGPAKAIAGKKK.

This sequence belongs to the universal ribosomal protein uS13 family. As to quaternary structure, part of the 30S ribosomal subunit. Forms a loose heterodimer with protein S19. Forms two bridges to the 50S subunit in the 70S ribosome.

Its function is as follows. Located at the top of the head of the 30S subunit, it contacts several helices of the 16S rRNA. In the 70S ribosome it contacts the 23S rRNA (bridge B1a) and protein L5 of the 50S subunit (bridge B1b), connecting the 2 subunits; these bridges are implicated in subunit movement. Contacts the tRNAs in the A and P-sites. The polypeptide is Small ribosomal subunit protein uS13 (Allorhizobium ampelinum (strain ATCC BAA-846 / DSM 112012 / S4) (Agrobacterium vitis (strain S4))).